A 341-amino-acid polypeptide reads, in one-letter code: HTH-type transcriptional repressor PurR (341 aa).

Residues 2–56 (ATIKDVAKRANVSTTTVSHVINKTRFVAEETRNAVWAAIKELHYSPSAVARSLKV) enclose the HTH lacI-type domain. The segment at residues 4–23 (IKDVAKRANVSTTTVSHVIN) is a DNA-binding region (H-T-H motif). Residues 48-56 (SAVARSLKV) mediate DNA binding. Residues Y73, R190, T192, F221, and D275 each contribute to the hypoxanthine site.

In terms of assembly, homodimer.

It functions in the pathway purine metabolism; purine nucleotide biosynthesis [regulation]. Functionally, is the main repressor of the genes involved in the de novo synthesis of purine nucleotides, regulating purB, purC, purEK, purF, purHD, purL, purMN and guaBA expression. PurR is allosterically activated to bind its cognate DNA by binding the purine corepressors, hypoxanthine or guanine, thereby effecting transcription repression. The chain is HTH-type transcriptional repressor PurR from Klebsiella pneumoniae (strain 342).